The chain runs to 772 residues: UDP-N-acetylmuramoyl-L-alanyl-D-glutamate--2,6-diaminopimelate ligase MurE homolog, chloroplastic (772 aa).

A chloroplast-targeting transit peptide spans 1–40 (MAFTFLSPHPVFLSLTGTTSSFSYKPVLLPFSRNSRTLTV). Disordered stretches follow at residues 42–87 (AGPA…KLEE) and 141–168 (LLKPNPPKTASLKKIGEEGNEEEGDVTD). Composition is skewed to acidic residues over residues 54–63 (ADDDPPEAPE) and 158–168 (EGNEEEGDVTD). Serine 194 carries the phosphoserine modification.

It belongs to the MurCDEF family. MurE subfamily. As to quaternary structure, component of the plastid-encoded plastid RNA polymerase (PEP) complex. As to expression, expressed in leaves and flowers.

The protein localises to the plastid. Its subcellular location is the chloroplast. Its function is as follows. Involved in chloroplast biogenesis. Required for thylakoid membrane development. Seems to be required for plastid-encoded plastid RNA polymerase (PEP)-dependent gene expression. This is UDP-N-acetylmuramoyl-L-alanyl-D-glutamate--2,6-diaminopimelate ligase MurE homolog, chloroplastic from Arabidopsis thaliana (Mouse-ear cress).